We begin with the raw amino-acid sequence, 212 residues long: uncharacterized protein (212 aa).

Helical transmembrane passes span 34-54 (IFGI…PAPG), 59-79 (FGVL…ELWL), 126-146 (ILMG…IPGT), and 171-191 (AGMI…YVFF).

To R.meliloti ExoD.

It is found in the cell membrane. This is an uncharacterized protein from Synechocystis sp. (strain ATCC 27184 / PCC 6803 / Kazusa).